Consider the following 126-residue polypeptide: MATINQLVRKPRVDVKKKSNVPALESCPQRRGVCTRVYTTTPKKPNSAMRKVARVRLTNGFEVTSYIGGEGHNLQEHSVVLIRGGRVKDLPGVRYHTVRGSLDTSGVNDRKQGRSKYGTKKPKDKK.

3-methylthioaspartic acid is present on Asp-89. Residues 99-126 are disordered; sequence RGSLDTSGVNDRKQGRSKYGTKKPKDKK. Residues 113-126 show a composition bias toward basic residues; the sequence is GRSKYGTKKPKDKK.

Belongs to the universal ribosomal protein uS12 family. As to quaternary structure, part of the 30S ribosomal subunit. Contacts proteins S8 and S17. May interact with IF1 in the 30S initiation complex.

Its function is as follows. With S4 and S5 plays an important role in translational accuracy. In terms of biological role, interacts with and stabilizes bases of the 16S rRNA that are involved in tRNA selection in the A site and with the mRNA backbone. Located at the interface of the 30S and 50S subunits, it traverses the body of the 30S subunit contacting proteins on the other side and probably holding the rRNA structure together. The combined cluster of proteins S8, S12 and S17 appears to hold together the shoulder and platform of the 30S subunit. This Legionella pneumophila (strain Paris) protein is Small ribosomal subunit protein uS12.